The following is a 776-amino-acid chain: Homoaconitase, mitochondrial (776 aa).

The N-terminal 24 residues, Met-1–Thr-24, are a transit peptide targeting the mitochondrion. Residues Cys-392, Cys-459, and Cys-462 each coordinate [4Fe-4S] cluster.

It belongs to the aconitase/IPM isomerase family. The cofactor is [4Fe-4S] cluster.

Its subcellular location is the mitochondrion. It carries out the reaction (2R,3S)-homoisocitrate = cis-homoaconitate + H2O. It functions in the pathway amino-acid biosynthesis; L-lysine biosynthesis via AAA pathway; L-alpha-aminoadipate from 2-oxoglutarate: step 3/5. Its function is as follows. Catalyzes the reversible hydration of cis-homoaconitate to (2R,3S)-homoisocitrate, a step in the alpha-aminoadipate pathway for lysine biosynthesis. This Gibberella zeae (strain ATCC MYA-4620 / CBS 123657 / FGSC 9075 / NRRL 31084 / PH-1) (Wheat head blight fungus) protein is Homoaconitase, mitochondrial (LYS4).